The sequence spans 95 residues: Large ribosomal subunit protein bL25 (95 aa).

The protein belongs to the bacterial ribosomal protein bL25 family. In terms of assembly, part of the 50S ribosomal subunit; part of the 5S rRNA/L5/L18/L25 subcomplex. Contacts the 5S rRNA. Binds to the 5S rRNA independently of L5 and L18.

Functionally, this is one of the proteins that binds to the 5S RNA in the ribosome where it forms part of the central protuberance. The chain is Large ribosomal subunit protein bL25 from Shewanella amazonensis (strain ATCC BAA-1098 / SB2B).